The primary structure comprises 1034 residues: MQISDTGRSHTPDFHAVLAREDWHNQTITHLNRLPAHPVFASWRDELAARDNLPSSRRRQLDGSGSSLTPAARLPSMRVVTQDLPDCRGTPVPSNWQMEGYDAPIYTNVRYPIDTTPPRVPEDNPTGCYSLHFTVEDTWRENGQTQIIFDGVNSAFHLWCNGVWVGYSQDSRLPAAFDLSPFLRPGDNRLCVMVMRWSAGSWLEDQDMWRMSGIFRSVWLLNKPQQRLCDVQLTPALDALYRDGTLQVQATIEATEAALAGLSVGVSLWRGEEQFAAGRQPLGTPTVDERGHYAERVDFSLAVATPAHWSAETPNCYRAVVTLWRGDELLEAEAWDIGFRRIEIADGLLRLNGKPLLIRGVNRHEHHHLRGQVVTEADMVQDILLMKQNNFNAVRCSHYPNAPRWYELCNRYGLYVVDEANIETHGMVPMNRLSDDPAWLPAFSARVTRMVQSNRNHPCIIIWSLGNESGGGGNHEALYHWLKRNDPSRPVQYEGGGADTTATDIICPMYARVERDQPIPAVPKWGIKKWISLPGEQRPLILCEYAHAMGNSLGNFADYWQAFREYPRLQGGFIWDWADQAIRKTFADGSVGWAYGGDFGDKPNDRQFCMNGLVFPDRTPHPSLVEAKHAQQYFQFTLLSTSPLRVRIISEYLFRPTDNEVVRWQVQAAGEPLYHGDLTLALPPEGSDEITLLDSLILPEGARAVWLTLEVTQPQATAWSEAEHRVAWQQFPLPAPLGCRRPPCLPALPDLIVSDEVWQIRAGSQCWTIDRRTGLLSRWSVGGQEQLLTPLRDQFIRAPLDNDIGVSEVERIDPNAWVERWRSAGLYDLEAHCVQCDAQRLANETLVDCRWHYLRGEEVVIVSHWRMHFTADGTLRLAVDGERAETLPPLPRVGLHFQVADQQAPVSWLGLGPHENYPDRRSSACFARWEQPLAAMTTPYIFPTENGLRCDTQALDWGRWHISGHFHFSVQPWSTRQLMETDHWHKMQAEDGVWITLDGLHMGVGGDDSWTPSVLPQWLLSQTRWQYEVSLRSL.

Asn-108 and Asp-207 together coordinate substrate. Asp-207 provides a ligand contact to Na(+). Positions 423, 425, and 468 each coordinate Mg(2+). Residues Glu-468 and 544-547 each bind substrate; that span reads EYAH. Glu-468 (proton donor) is an active-site residue. The Nucleophile role is filled by Glu-544. Asn-604 serves as a coordination point for Mg(2+). Phe-608 and Asn-611 together coordinate Na(+). Substrate is bound by residues Asn-611 and Trp-1010.

It belongs to the glycosyl hydrolase 2 family. Homotetramer. The cofactor is Mg(2+). It depends on Na(+) as a cofactor.

It carries out the reaction Hydrolysis of terminal non-reducing beta-D-galactose residues in beta-D-galactosides.. In Klebsiella pneumoniae, this protein is Beta-galactosidase.